A 268-amino-acid chain; its full sequence is Octanoyltransferase (268 aa).

Positions 47–243 (PETPDQVWLV…ALCEVLAAHE (197 aa)) constitute a BPL/LPL catalytic domain. Substrate contacts are provided by residues 87–94 (RGGQITYH), 159–161 (ALG), and 172–174 (GVS). The active-site Acyl-thioester intermediate is the C190.

The protein belongs to the LipB family.

Its subcellular location is the cytoplasm. It catalyses the reaction octanoyl-[ACP] + L-lysyl-[protein] = N(6)-octanoyl-L-lysyl-[protein] + holo-[ACP] + H(+). Its pathway is protein modification; protein lipoylation via endogenous pathway; protein N(6)-(lipoyl)lysine from octanoyl-[acyl-carrier-protein]: step 1/2. Catalyzes the transfer of endogenously produced octanoic acid from octanoyl-acyl-carrier-protein onto the lipoyl domains of lipoate-dependent enzymes. Lipoyl-ACP can also act as a substrate although octanoyl-ACP is likely to be the physiological substrate. This Cupriavidus necator (strain ATCC 17699 / DSM 428 / KCTC 22496 / NCIMB 10442 / H16 / Stanier 337) (Ralstonia eutropha) protein is Octanoyltransferase.